The sequence spans 65 residues: Temporin-LK1 (65 aa).

Positions 1–22 (MFTMKKSLLLLFFLGAINLPLC) are cleaved as a signal peptide. The propeptide occupies 23-44 (QEERNAEEERRDGDDEGSVEVQ). The residue at position 63 (Phe63) is a Phenylalanine amide.

Expressed by the skin glands.

Its subcellular location is the secreted. Has antimicrobial activity against Gram-positive bacteria S.aureus ATCC 2592 (MIC=2.5 uM), S.aureus ATCC 43300 (MIC=2.5 uM) and B.subtilis (MIC=15.0 uM), against Gram-negative bacteria E.coli ML-35P (MIC=30.0 uM), P.aeruginosa PA01 (MIC=2.5 uM) and P.aeruginosa ATCC 27853 (MIC=2.5 uM) and against fungus C.albicans ATCC 2002 (MIC=5.0 uM). The protein is Temporin-LK1 of Limnonectes kuhlii (Kuhl's Creek frog).